Here is a 321-residue protein sequence, read N- to C-terminus: MKFVLAIASLLVLSTVYARPASIKTFEEFKKAFNKNYATVEEEEVARKNFLESLKYVEANKGAINHLSDLSLDEFKNRYLMSAEAFEQLKTQFDLNAETSACRINSVNVPSELDLRSLRTVTPIRMQGGCGSCWAFSGVAATESAYLAYRNTSLDLSEQELVDCASQHGCHGDTIPRGIEYIQQNGVVEERSYPYVAREQRCRRPNSQHYGISNYCQIYPPDVKQIREALTQTHTAIAVIIGIKDLRAFQHYDGRTIIQHDNGYQPNYHAVNIVGYGSTQGDDYWIVRNSWDTTWGDSGYGYFQAGNNLMMIEQYPYVVIM.

An N-terminal signal peptide occupies residues M1 to A18. A propeptide spans R19–E98 (activation peptide). Intrachain disulfides connect C102–C216, C130–C170, and C164–C202. Residue C133 is part of the active site. N151 carries N-linked (GlcNAc...) asparagine glycosylation. Catalysis depends on residues H269 and R288.

This sequence belongs to the peptidase C1 family. Monomer.

The protein resides in the secreted. The enzyme catalyses Broad endopeptidase specificity.. Thiol protease that hydrolyzes proteins, with a preference for Phe or basic residues. The protein is Peptidase 1 (DERF1) of Dermatophagoides farinae (American house dust mite).